Consider the following 86-residue polypeptide: Toxin CSTX-20 (86 aa).

In terms of tissue distribution, expressed by the venom gland.

The protein resides in the secreted. The polypeptide is Toxin CSTX-20 (Cupiennius salei (American wandering spider)).